Here is a 217-residue protein sequence, read N- to C-terminus: MSGLSESAKLVKDALERRGLETPMQPNLATPAEKKEKIEQHMREILNLLGLDLTDDSLEETPQRIAKMYVDEIFSGLDYANFPKITVIENKMKVSEMVKVKDITLTSTCEHHLVTIDGTAAVAYIPRGKIIGLSKINRIVRFFAQRPQVQERMTQQILVALQTLLESDDVAVTIDATHYCVKSRGVMDATSVTTTTALGGIFKSNPATRAEFLHGLR.

Residues Cys109, His112, and Cys180 each contribute to the Zn(2+) site.

This sequence belongs to the GTP cyclohydrolase I family. In terms of assembly, toroid-shaped homodecamer, composed of two pentamers of five dimers.

The enzyme catalyses GTP + H2O = 7,8-dihydroneopterin 3'-triphosphate + formate + H(+). It functions in the pathway cofactor biosynthesis; 7,8-dihydroneopterin triphosphate biosynthesis; 7,8-dihydroneopterin triphosphate from GTP: step 1/1. This chain is GTP cyclohydrolase 1, found in Vibrio cholerae serotype O1 (strain ATCC 39315 / El Tor Inaba N16961).